Consider the following 707-residue polypeptide: Methionine--tRNA ligase (707 aa).

The short motif at 13–23 (PYANGNFHIGH) is the 'HIGH' region element. Zn(2+) is bound by residues C147, C150, C160, and C163. Positions 344 to 348 (KMSKS) match the 'KMSKS' region motif. K347 serves as a coordination point for ATP. The region spanning 601 to 707 (DFAKVDLRIA…PGATPGMRIH (107 aa)) is the tRNA-binding domain.

This sequence belongs to the class-I aminoacyl-tRNA synthetase family. MetG type 1 subfamily. As to quaternary structure, homodimer. Zn(2+) serves as cofactor.

Its subcellular location is the cytoplasm. The enzyme catalyses tRNA(Met) + L-methionine + ATP = L-methionyl-tRNA(Met) + AMP + diphosphate. Its function is as follows. Is required not only for elongation of protein synthesis but also for the initiation of all mRNA translation through initiator tRNA(fMet) aminoacylation. This Polaromonas naphthalenivorans (strain CJ2) protein is Methionine--tRNA ligase.